The following is a 499-amino-acid chain: Dual specificity protein kinase CLK2 (499 aa).

The disordered stretch occupies residues 1–67 (MPHPRRYHSS…SYDDRSSDRR (67 aa)). Residues 8-21 (HSSERGSRGSYREH) are compositionally biased toward basic and acidic residues. Residues 22-33 (YRSRKHKRRRSR) show a composition bias toward basic residues. Residue Ser34 is modified to Phosphoserine; by PKB/AKT1. The span at 47–67 (REDSYHVRSRSSYDDRSSDRR) shows a compositional bias: basic and acidic residues. Ser98 carries the post-translational modification Phosphoserine. Tyr99 is subject to Phosphotyrosine; by autocatalysis. The interval 101–143 (YQRENSSYRSQRSSRRKHRRRRRRSRTFSRSSSQHSSRRAKSV) is disordered. Residues 112–127 (RSSRRKHRRRRRRSRT) are compositionally biased toward basic residues. Thr127 is subject to Phosphothreonine; by PKB/AKT1. At Ser142 the chain carries Phosphoserine; by autocatalysis. Tyr153 is subject to Phosphotyrosine. Residues 163–479 (YEIVSTLGEG…LGEALQHPFF (317 aa)) form the Protein kinase domain. ATP-binding positions include 169–177 (LGEGTFGRV) and Lys193. Asp290 (proton acceptor) is an active-site residue. A Phosphothreonine; by PKB/AKT2 modification is found at Thr344.

This sequence belongs to the protein kinase superfamily. CMGC Ser/Thr protein kinase family. Lammer subfamily. Interacts with RBMX. Interacts with AKT1 and UBL5. Autophosphorylates on all three types of residues. Phosphorylation on Ser-34 and Thr-127 by AKT1 is induced by ionizing radiation or insulin. Phosphorylation plays a critical role in cell proliferation following low dose radiation and prevents cell death following high dose radiation. Phosphorylation at Thr-344 by PKB/AKT2 induces its kinase activity which is required for its stability. The phosphorylation status at Ser-142 influences its subnuclear localization; inhibition of phosphorylation at Ser-142 results in accumulation in the nuclear speckle. In terms of tissue distribution, endothelial cells. Expressed in androgen-dependent prostate cancer cells.

Its subcellular location is the nucleus. It localises to the nucleus speckle. The catalysed reaction is L-seryl-[protein] + ATP = O-phospho-L-seryl-[protein] + ADP + H(+). It catalyses the reaction L-threonyl-[protein] + ATP = O-phospho-L-threonyl-[protein] + ADP + H(+). It carries out the reaction L-tyrosyl-[protein] + ATP = O-phospho-L-tyrosyl-[protein] + ADP + H(+). With respect to regulation, 5,6-dichloro-1-b-D-ribofuranosylbenzimidazole (DRB) inhibits autophosphorylation. TG003 inhibits its kinase activity and affects the regulation of alternative splicing mediated by phosphorylation of SR proteins. Functionally, dual specificity kinase acting on both serine/threonine and tyrosine-containing substrates. Phosphorylates serine- and arginine-rich (SR) proteins of the spliceosomal complex. May be a constituent of a network of regulatory mechanisms that enable SR proteins to control RNA splicing and can cause redistribution of SR proteins from speckles to a diffuse nucleoplasmic distribution. Acts as a suppressor of hepatic gluconeogenesis and glucose output by repressing PPARGC1A transcriptional activity on gluconeogenic genes via its phosphorylation. Phosphorylates PPP2R5B thereby stimulating the assembly of PP2A phosphatase with the PPP2R5B-AKT1 complex leading to dephosphorylation of AKT1. Phosphorylates: PTPN1, SRSF1 and SRSF3. Regulates the alternative splicing of tissue factor (F3) pre-mRNA in endothelial cells. Phosphorylates PAGE4 at several serine and threonine residues and this phosphorylation attenuates the ability of PAGE4 to potentiate the transcriptional activator activity of JUN. This is Dual specificity protein kinase CLK2 (CLK2) from Homo sapiens (Human).